Reading from the N-terminus, the 372-residue chain is Lipoyl synthase, mitochondrial (372 aa).

The transit peptide at 1 to 27 directs the protein to the mitochondrion; the sequence is MSLRCGDAARTLGPRVFGRYFCSPVRP. Cys106, Cys111, Cys117, Cys137, Cys141, Cys144, and Ser352 together coordinate [4Fe-4S] cluster. The region spanning 122-341 is the Radical SAM core domain; it reads EYATATATIM…EKVGNELGFH (220 aa).

It belongs to the radical SAM superfamily. Lipoyl synthase family. Requires [4Fe-4S] cluster as cofactor.

It localises to the mitochondrion. The catalysed reaction is [[Fe-S] cluster scaffold protein carrying a second [4Fe-4S](2+) cluster] + N(6)-octanoyl-L-lysyl-[protein] + 2 oxidized [2Fe-2S]-[ferredoxin] + 2 S-adenosyl-L-methionine + 4 H(+) = [[Fe-S] cluster scaffold protein] + N(6)-[(R)-dihydrolipoyl]-L-lysyl-[protein] + 4 Fe(3+) + 2 hydrogen sulfide + 2 5'-deoxyadenosine + 2 L-methionine + 2 reduced [2Fe-2S]-[ferredoxin]. It functions in the pathway protein modification; protein lipoylation via endogenous pathway; protein N(6)-(lipoyl)lysine from octanoyl-[acyl-carrier-protein]: step 2/2. Catalyzes the radical-mediated insertion of two sulfur atoms into the C-6 and C-8 positions of the octanoyl moiety bound to the lipoyl domains of lipoate-dependent enzymes, thereby converting the octanoylated domains into lipoylated derivatives. This chain is Lipoyl synthase, mitochondrial, found in Homo sapiens (Human).